Consider the following 353-residue polypeptide: Protein RecA (353 aa).

67–74 (GPESSGKT) is a binding site for ATP.

Belongs to the RecA family.

Its subcellular location is the cytoplasm. In terms of biological role, can catalyze the hydrolysis of ATP in the presence of single-stranded DNA, the ATP-dependent uptake of single-stranded DNA by duplex DNA, and the ATP-dependent hybridization of homologous single-stranded DNAs. It interacts with LexA causing its activation and leading to its autocatalytic cleavage. In Shewanella sediminis (strain HAW-EB3), this protein is Protein RecA.